The chain runs to 527 residues: Probable bifunctional tRNA threonylcarbamoyladenosine biosynthesis protein (527 aa).

Residues 1-324 (MIVLGLEGTA…YRIDEVDAPW (324 aa)) are kae1. His-107, His-111, and Tyr-128 together coordinate Fe cation. L-threonylcarbamoyladenylate is bound by residues 128 to 132 (YVSGG), Asp-160, Gly-173, Glu-177, and Asn-257. Asp-285 serves as a coordination point for Fe cation. Positions 330–527 (VKYRDAGAES…EDIRRRHRYV (198 aa)) constitute a Protein kinase domain. ATP contacts are provided by residues 333-341 (RDAGAESRI) and Lys-354. Asp-445 functions as the Proton acceptor; for kinase activity in the catalytic mechanism.

This sequence in the N-terminal section; belongs to the KAE1 / TsaD family. In the C-terminal section; belongs to the protein kinase superfamily. Tyr protein kinase family. BUD32 subfamily. In terms of assembly, component of the KEOPS complex that consists of Kae1, Bud32, Cgi121 and Pcc1; the whole complex dimerizes. The cofactor is Fe(2+).

It is found in the cytoplasm. The enzyme catalyses L-seryl-[protein] + ATP = O-phospho-L-seryl-[protein] + ADP + H(+). It catalyses the reaction L-threonyl-[protein] + ATP = O-phospho-L-threonyl-[protein] + ADP + H(+). The catalysed reaction is L-threonylcarbamoyladenylate + adenosine(37) in tRNA = N(6)-L-threonylcarbamoyladenosine(37) in tRNA + AMP + H(+). Required for the formation of a threonylcarbamoyl group on adenosine at position 37 (t(6)A37) in tRNAs that read codons beginning with adenine. Is a component of the KEOPS complex that is probably involved in the transfer of the threonylcarbamoyl moiety of threonylcarbamoyl-AMP (TC-AMP) to the N6 group of A37. The Kae1 domain likely plays a direct catalytic role in this reaction. The Bud32 domain probably displays kinase activity that regulates Kae1 function. The chain is Probable bifunctional tRNA threonylcarbamoyladenosine biosynthesis protein from Thermoplasma volcanium (strain ATCC 51530 / DSM 4299 / JCM 9571 / NBRC 15438 / GSS1).